Consider the following 237-residue polypeptide: 1-(5-phosphoribosyl)-5-[(5-phosphoribosylamino)methylideneamino] imidazole-4-carboxamide isomerase (237 aa).

D8 functions as the Proton acceptor in the catalytic mechanism. The Proton donor role is filled by D129.

This sequence belongs to the HisA/HisF family.

It localises to the cytoplasm. It carries out the reaction 1-(5-phospho-beta-D-ribosyl)-5-[(5-phospho-beta-D-ribosylamino)methylideneamino]imidazole-4-carboxamide = 5-[(5-phospho-1-deoxy-D-ribulos-1-ylimino)methylamino]-1-(5-phospho-beta-D-ribosyl)imidazole-4-carboxamide. It participates in amino-acid biosynthesis; L-histidine biosynthesis; L-histidine from 5-phospho-alpha-D-ribose 1-diphosphate: step 4/9. This Methanosphaera stadtmanae (strain ATCC 43021 / DSM 3091 / JCM 11832 / MCB-3) protein is 1-(5-phosphoribosyl)-5-[(5-phosphoribosylamino)methylideneamino] imidazole-4-carboxamide isomerase.